The following is a 324-amino-acid chain: Polyphosphate glucokinase (324 aa).

Positions 53 to 79 (TSTDATADTPRTSPPSDTAGTTSRHRG) are disordered. Positions 62 to 74 (PRTSPPSDTAGTT) are enriched in polar residues. 83–88 (DIGGSS) serves as a coordination point for ATP.

This sequence belongs to the ROK (NagC/XylR) family. In terms of assembly, homodimer.

The catalysed reaction is [phosphate](n) + D-glucose = [phosphate](n-1) + D-glucose 6-phosphate + H(+). It catalyses the reaction D-glucose + ATP = D-glucose 6-phosphate + ADP + H(+). Functionally, catalyzes the phosphorylation of glucose using polyphosphate or ATP as the phosphoryl donor. The protein is Polyphosphate glucokinase (ppgK) of Mycobacterium leprae (strain TN).